The following is a 229-amino-acid chain: Large ribosomal subunit protein uL1 (229 aa).

Belongs to the universal ribosomal protein uL1 family. In terms of assembly, part of the 50S ribosomal subunit.

Its function is as follows. Binds directly to 23S rRNA. The L1 stalk is quite mobile in the ribosome, and is involved in E site tRNA release. In terms of biological role, protein L1 is also a translational repressor protein, it controls the translation of the L11 operon by binding to its mRNA. This is Large ribosomal subunit protein uL1 from Chlorobium phaeobacteroides (strain DSM 266 / SMG 266 / 2430).